The sequence spans 926 residues: MKKTRSTTLRRAWPSSDFSDRASDRMRSRSEKDYRLHKRFPAAFAPQASRGYMTSGDVSPISMSPISQSQFIPLGEILCLAISAMNSARKPVTQEALMEHLTTCFPGVPTPSQEILRHTLNTLVRERKIYPTPDGYFIVTPQTYFITPSLIRTNSKWYHLDERIPDRSQCTSPQPGTITPSASGCVRERTLPRNHCDSCHCCREDVHSTHAPTLQRKSAKDCKDPYCPPSLCQVPPTEKSKSTVNFSYKTETLSKPKDSEKQSKKFGLKLFRLSFKKDKTKQLANFSAQFPPEEWPLRDEDTPATIPREVEMEIIRRINPDLTVENVMRHTALMKKLEEEKAQRSKAGSSAHHSGRSKKSRTHRKSHGKSRSHSKTRVSKGDPSDGSHLDIPGGREYDFCDPLSRVPREGCFLIEHKGDNFIMHSNTNVLESHFPMTPEWDVSGELAKRRTEMPFPEPSRGSSHSKVHRSHSHTQDRRSRNERSNKAKERSRSMDNSKGPLGASSLGTPEDLAEGCSQDDQTPSQSYVDDSTLRPAQTVGHQRAHIASTSYKEVCIPEIVSGSKEPSSACSLLEPGKPPESLPSYGELNSCPTKTATDDYFQCNTSSETVLTAPSPLGKNKEDHDTLTLAEGVKKLSPSDRQVPHSSREPVGHKEESPKGPGGGPAASGGVAEGIANGRLVQHHGAEPSSLDKRKEIFSKDTLFKPLHSTLSVNSYHKSSLSLLKSHPKTPADTLPGRCEKLEPSLGTSAAQATPASQRQQESGGNQETSFDYYNVSDDDESEEGANKNTEEEKNREDVGTMQWLLEREKERDLQRKFEKNLTLLAPKETDSSSNQRATHSARLDSMDSSSITVDSGFNSPRTRESLASNTSSIVESNRRQNPALSPAHGGAGPAFNFRASADPPTNEAEKLQKPSNCLQASVTSV.

Disordered regions lie at residues 1-32, 338-394, 452-529, 632-693, 724-803, and 825-926; these read MKKT…RSEK, EEEK…IPGG, EMPF…SYVD, GVKK…SLDK, LKSH…GTMQ, and LAPK…VTSV. The span at 18–32 shows a compositional bias: basic and acidic residues; the sequence is FSDRASDRMRSRSEK. Positions 353-378 are enriched in basic residues; that stretch reads HSGRSKKSRTHRKSHGKSRSHSKTRV. The segment covering 379 to 394 has biased composition (basic and acidic residues); the sequence is SKGDPSDGSHLDIPGG. Residues 463–472 show a composition bias toward basic residues; sequence SHSKVHRSHS. Residues 473-495 show a composition bias toward basic and acidic residues; it reads HTQDRRSRNERSNKAKERSRSMD. Residues 518-529 are compositionally biased toward polar residues; sequence QDDQTPSQSYVD. Composition is skewed to basic and acidic residues over residues 632-658 and 684-693; these read GVKK…EESP and HGAEPSSLDK. Positions 746 to 772 are enriched in polar residues; it reads LGTSAAQATPASQRQQESGGNQETSFD. Basic and acidic residues predominate over residues 785–799; that stretch reads GANKNTEEEKNREDV. Polar residues-rich tracts occupy residues 847-884 and 914-926; these read MDSS…QNPA and KPSN…VTSV.

The chain is Storkhead-box protein 2 (STOX2) from Macaca fascicularis (Crab-eating macaque).